A 214-amino-acid chain; its full sequence is Calcineurin B homologous protein 3 (214 aa).

The disordered stretch occupies residues 1-20; sequence MGAAHSASEEVRELEGKTGF. Glycine 2 is lipidated: N-myristoyl glycine. Over residues 7-16 the composition is skewed to basic and acidic residues; it reads ASEEVRELEG. In terms of domain architecture, EF-hand spans 110–145; it reads SRKEKLRFLFHMYDSDSDGRITLEEYRNVVEELLSG. Positions 123, 125, 127, 129, and 134 each coordinate Ca(2+).

The protein belongs to the calcineurin regulatory subunit family. CHP subfamily. In terms of assembly, monomer. Homodimer; disulfide-linked. Interacts with SLC9A1/NHE1; the interaction enables an optimal Na(+)/H(+) exchange activity. In terms of tissue distribution, expressed in mature megakaryocytes and polymorphonuclear granulocytes (at protein level). Abundantly expressed in heart. Also expressed at a lower level in adult testis and salivary gland, and in the placenta.

The protein resides in the nucleus. The protein localises to the cytoplasm. It is found in the membrane. It localises to the cell membrane. Its subcellular location is the cell projection. The protein resides in the lamellipodium. The protein localises to the ruffle membrane. Functions as an integral cofactor in cell pH regulation by controlling plasma membrane-type Na(+)/H(+) exchange activity. Promotes the maturation, transport, cell surface stability and exchange activity of SLC9A1/NHE1 at the plasma membrane. Promotes the induction of hematopoietic stem cell differentiation toward megakaryocytic lineage. Essential for the coupling of ERK cascade activation with the expression of ETS family genes in megakaryocytic differentiation. Also involved in granulocytic differentiation in a ERK-dependent manner. Inhibits the phosphatase activity of calcineurin. The sequence is that of Calcineurin B homologous protein 3 (TESC) from Homo sapiens (Human).